A 283-amino-acid chain; its full sequence is Phospholipase C (283 aa).

The N-terminal stretch at 1-24 is a signal peptide; sequence MKKKVLALAAAITVVAPLQSVAFA. Positions 25–38 are excised as a propeptide; the sequence is HENDGGSKIKIVHR. Positions 39, 52, 93, 107, 156, 160, 166, 180, and 184 each coordinate Zn(2+). One can recognise a Zn-dependent PLC domain in the interval 39–283; it reads WSAEDKHKEG…QLWFDTYGDR (245 aa).

This sequence belongs to the bacterial zinc-metallophospholipase C family. As to quaternary structure, monomer. Zn(2+) is required as a cofactor.

The enzyme catalyses a 1,2-diacyl-sn-glycero-3-phosphocholine + H2O = phosphocholine + a 1,2-diacyl-sn-glycerol + H(+). Functionally, required, with sphingomyelinase, to effect target cell lysis (hemolysis). This chain is Phospholipase C (plc), found in Bacillus cereus.